The following is a 156-amino-acid chain: RNA pyrophosphohydrolase (156 aa).

In terms of domain architecture, Nudix hydrolase spans 6 to 148 (NYRPNVAAIV…KKNIYVRVIK (143 aa)). The Nudix box signature appears at 43–64 (GGIDKGESVKNALFRELKEEIG).

Belongs to the Nudix hydrolase family. RppH subfamily. A divalent metal cation serves as cofactor.

Accelerates the degradation of transcripts by removing pyrophosphate from the 5'-end of triphosphorylated RNA, leading to a more labile monophosphorylated state that can stimulate subsequent ribonuclease cleavage. This chain is RNA pyrophosphohydrolase, found in Campylobacter jejuni subsp. jejuni serotype O:2 (strain ATCC 700819 / NCTC 11168).